Reading from the N-terminus, the 285-residue chain is 4-hydroxybenzoate octaprenyltransferase (285 aa).

8 helical membrane-spanning segments follow: residues 28–48 (LWAL…CIFF), 86–106 (IAAW…FALI), 110–130 (NSLT…YPFF), 133–153 (FFAI…PMAF), 160–180 (VPLV…AYDT), 207–227 (VAAI…AGVM), 232–252 (WPYW…YTLI), and 262–284 (AAFR…AYAI).

This sequence belongs to the UbiA prenyltransferase family. Mg(2+) serves as cofactor.

The protein resides in the cell inner membrane. The catalysed reaction is all-trans-octaprenyl diphosphate + 4-hydroxybenzoate = 4-hydroxy-3-(all-trans-octaprenyl)benzoate + diphosphate. The protein operates within cofactor biosynthesis; ubiquinone biosynthesis. Its function is as follows. Catalyzes the prenylation of para-hydroxybenzoate (PHB) with an all-trans polyprenyl group. Mediates the second step in the final reaction sequence of ubiquinone-8 (UQ-8) biosynthesis, which is the condensation of the polyisoprenoid side chain with PHB, generating the first membrane-bound Q intermediate 3-octaprenyl-4-hydroxybenzoate. The chain is 4-hydroxybenzoate octaprenyltransferase from Cupriavidus pinatubonensis (strain JMP 134 / LMG 1197) (Cupriavidus necator (strain JMP 134)).